A 109-amino-acid chain; its full sequence is Ribulose bisphosphate carboxylase small subunit (109 aa).

Belongs to the RuBisCO small chain family. Heterohexadecamer of 8 large and 8 small subunits. Forms complexes of many stoichiometries with Raf1 and RbcL.

It is found in the carboxysome. Functionally, ruBisCO catalyzes two reactions: the carboxylation of D-ribulose 1,5-bisphosphate, the primary event in carbon dioxide fixation, as well as the oxidative fragmentation of the pentose substrate in the photorespiration process. Both reactions occur simultaneously and in competition at the same active site. Although the small subunit is not catalytic it is essential for maximal activity. This chain is Ribulose bisphosphate carboxylase small subunit, found in Nostoc sp. (strain PCC 7120 / SAG 25.82 / UTEX 2576).